The following is a 598-amino-acid chain: Elongation factor 4 (598 aa).

One can recognise a tr-type G domain in the interval 5–187 (SHIRNFSIIA…RLVATIPAPI (183 aa)). GTP is bound by residues 17–22 (DHGKST) and 134–137 (NKID).

The protein belongs to the TRAFAC class translation factor GTPase superfamily. Classic translation factor GTPase family. LepA subfamily.

The protein localises to the cell inner membrane. The catalysed reaction is GTP + H2O = GDP + phosphate + H(+). In terms of biological role, required for accurate and efficient protein synthesis under certain stress conditions. May act as a fidelity factor of the translation reaction, by catalyzing a one-codon backward translocation of tRNAs on improperly translocated ribosomes. Back-translocation proceeds from a post-translocation (POST) complex to a pre-translocation (PRE) complex, thus giving elongation factor G a second chance to translocate the tRNAs correctly. Binds to ribosomes in a GTP-dependent manner. In Pseudomonas fluorescens (strain Pf0-1), this protein is Elongation factor 4.